The chain runs to 248 residues: Triosephosphate isomerase (248 aa).

Residue 9 to 11 (NWK) coordinates substrate. His-94 acts as the Electrophile in catalysis. Glu-166 acts as the Proton acceptor in catalysis. Residues Gly-172, Ser-212, and 233–234 (GG) each bind substrate.

Belongs to the triosephosphate isomerase family. In terms of assembly, homodimer.

Its subcellular location is the cytoplasm. The enzyme catalyses D-glyceraldehyde 3-phosphate = dihydroxyacetone phosphate. The protein operates within carbohydrate biosynthesis; gluconeogenesis. It participates in carbohydrate degradation; glycolysis; D-glyceraldehyde 3-phosphate from glycerone phosphate: step 1/1. Functionally, involved in the gluconeogenesis. Catalyzes stereospecifically the conversion of dihydroxyacetone phosphate (DHAP) to D-glyceraldehyde-3-phosphate (G3P). The polypeptide is Triosephosphate isomerase (Clostridium botulinum (strain Okra / Type B1)).